The primary structure comprises 229 residues: Large ribosomal subunit protein uL1c (229 aa).

This sequence belongs to the universal ribosomal protein uL1 family. As to quaternary structure, part of the 50S ribosomal subunit.

It is found in the plastid. The protein localises to the chloroplast. Its function is as follows. Binds directly to 23S rRNA. Might be involved in E site tRNA release (Potential). This Pyropia yezoensis (Susabi-nori) protein is Large ribosomal subunit protein uL1c (rpl1).